The following is a 171-amino-acid chain: Adenine phosphoribosyltransferase (171 aa).

It belongs to the purine/pyrimidine phosphoribosyltransferase family. As to quaternary structure, homodimer.

The protein resides in the cytoplasm. It carries out the reaction AMP + diphosphate = 5-phospho-alpha-D-ribose 1-diphosphate + adenine. It functions in the pathway purine metabolism; AMP biosynthesis via salvage pathway; AMP from adenine: step 1/1. In terms of biological role, catalyzes a salvage reaction resulting in the formation of AMP, that is energically less costly than de novo synthesis. This chain is Adenine phosphoribosyltransferase (apt), found in Prochlorococcus marinus subsp. pastoris (strain CCMP1986 / NIES-2087 / MED4).